The primary structure comprises 363 residues: RNA polymerase II holoenzyme cyclin-like subunit (363 aa).

The 91-residue stretch at 53–143 (YQMLRLAKNL…IGECEFWLIS (91 aa)) folds into the Cyclin N-terminal domain. A disordered region spans residues 252 to 312 (TPGGSGSPAM…SPQKEKSKLQ (61 aa)). Polar residues predominate over residues 265-276 (IQQNPPNQAYQL). Low complexity predominate over residues 277 to 298 (TPQQQEMFRQQQMQQQNRQPET). Residues 299-310 (QAKDSPQKEKSK) are compositionally biased toward basic and acidic residues.

Belongs to the cyclin family. Cyclin C subfamily. As to quaternary structure, component of the SRB8-11 complex, a regulatory module of the Mediator complex.

Its subcellular location is the nucleus. Functionally, component of the SRB8-11 complex. The SRB8-11 complex is a regulatory module of the Mediator complex which is itself involved in regulation of basal and activated RNA polymerase II-dependent transcription. The SRB8-11 complex may be involved in the transcriptional repression of a subset of genes regulated by Mediator. It may inhibit the association of the Mediator complex with RNA polymerase II to form the holoenzyme complex. The SRB8-11 complex phosphorylates the C-terminal domain (CTD) of the largest subunit of RNA polymerase II. The chain is RNA polymerase II holoenzyme cyclin-like subunit (SSN8) from Pyricularia oryzae (strain 70-15 / ATCC MYA-4617 / FGSC 8958) (Rice blast fungus).